The sequence spans 160 residues: Lymphocyte antigen 96 (160 aa).

The signal sequence occupies residues 1–16; sequence MFPFMLFSTLFSSIFT. 3 cysteine pairs are disulfide-bonded: C25–C51, C37–C148, and C95–C105. N26 carries an N-linked (GlcNAc...) asparagine glycan. Residue N114 is glycosylated (N-linked (GlcNAc...) asparagine). An interaction with lipopolysaccharide region spans residues 119–123; it reads FSFQG. A glycan (N-linked (GlcNAc...) asparagine) is linked at N150.

Heterogeneous homomer formed from homodimers; disulfide-linked. Belongs to the lipopolysaccharide (LPS) receptor, a multi-protein complex containing at least CD14, LY96 and TLR4. Binds to the extracellular domains of TLR2 and TLR4. Ligand binding induces interaction with TLR4 and oligomerization of the complex. Post-translationally, N-glycosylated.

It localises to the secreted. It is found in the extracellular space. In terms of biological role, binds bacterial lipopolysaccharide (LPS). Cooperates with TLR4 in the innate immune response to bacterial lipopolysaccharide (LPS), and with TLR2 in the response to cell wall components from Gram-positive and Gram-negative bacteria. Enhances TLR4-dependent activation of NF-kappa-B. Cells expressing both LY96 and TLR4, but not TLR4 alone, respond to LPS. The chain is Lymphocyte antigen 96 (LY96) from Bos taurus (Bovine).